We begin with the raw amino-acid sequence, 208 residues long: Putative adhesin P1-like protein MPN_468 (208 aa).

Disordered stretches follow at residues 29-49 (TNGS…VAPT) and 97-172 (DSKT…NLTP). Over residues 100 to 132 (TQNNTTTNENHTKFASATGSGQQQGSTTTTSAG) the composition is skewed to low complexity. Over residues 145–158 (SGNSISVQEATSGD) the composition is skewed to polar residues. The span at 159–172 (NLTNYTNLPPNLTP) shows a compositional bias: low complexity.

The protein belongs to the adhesin P1 family.

In Mycoplasma pneumoniae (strain ATCC 29342 / M129 / Subtype 1) (Mycoplasmoides pneumoniae), this protein is Putative adhesin P1-like protein MPN_468.